The following is a 740-amino-acid chain: Dipeptidyl peptidase family member 6 (740 aa).

Position 1 (Met1) is a topological domain, cytoplasmic. A helical; Signal-anchor for type II membrane protein transmembrane segment spans residues 2–22 (LFLPILILNLLIITHAIDIIP). At 23–740 (REVLFQDPKY…VMNRIFPVQG (718 aa)) the chain is on the lumenal side. N-linked (GlcNAc...) asparagine glycans are attached at residues Asn108, Asn308, and Asn506. Catalysis depends on charge relay system residues Ser516, Asp604, and His636. A disulfide bridge connects residues Cys535 and Cys658. An N-linked (GlcNAc...) asparagine glycan is attached at Asn672.

This sequence belongs to the peptidase S9B family. DPPIV subfamily.

The protein resides in the cell membrane. Functionally, removes N-terminal dipeptides sequentially from polypeptides. Essential for control of distal tip cell migration. The protein is Dipeptidyl peptidase family member 6 (dpf-6) of Caenorhabditis elegans.